Consider the following 166-residue polypeptide: Podoplanin (166 aa).

The signal sequence occupies residues 1-22; it reads MWTAPVLLWVLGSVWFWDSAQG. At 23-135 the chain is on the extracellular side; it reads GAIGALEDDL…KKDGLAVVTL (113 aa). Residues Thr-34, Thr-52, Thr-55, and Thr-56 are each glycosylated (O-linked (GalNAc...) threonine). Over residues 54–63 the composition is skewed to basic and acidic residues; sequence DTTGELDKST. The segment at 54 to 124 is disordered; sequence DTTGELDKST…DNAGGETQTT (71 aa). O-linked (GalNAc...) serine glycosylation is present at Ser-62. O-linked (GalNAc...) threonine glycosylation is found at Thr-63, Thr-71, and Thr-80. O-linked (GalNAc...) serine glycosylation is present at Ser-81. O-linked (GalNAc...) threonine glycosylation is present at Thr-83. Ser-84 is a glycosylation site (O-linked (GalNAc...) serine). Basic and acidic residues predominate over residues 84–93; that stretch reads SDHDHKEHES. 7 O-linked (GalNAc...) threonine glycosylation sites follow: Thr-94, Thr-95, Thr-96, Thr-101, Thr-105, Thr-109, and Thr-110. Residues 94–103 are compositionally biased toward polar residues; that stretch reads TTTVKAVTSH. Over residues 104–114 the composition is skewed to basic and acidic residues; it reads STDKKTTHPNR. The helical transmembrane segment at 136–156 threads the bilayer; that stretch reads VGIIIGVLLAIGFIGGIIIVV. The segment at 137–141 is requires for dimerization and lipid rafts association; that stretch reads GIIIG. The Cytoplasmic portion of the chain corresponds to 157–166; sequence MRKISGRFSP. Residues 158 to 159 form a requires for interaction with MSN and EZR region; sequence RK.

The protein belongs to the podoplanin family. Homodimer. Interacts with CLEC1B; the interaction is independent of CLEC1B glycosylation and activates CLEC1B; the interaction is dependent of sialic acid on O-glycans. Interacts with CD9; this interaction is homophilic and attenuates platelet aggregation and pulmonary metastasis induced by PDPN. Interacts with LGALS8; the interaction is glycosylation-dependent; may participate in connection of the lymphatic endothelium to the surrounding extracellular matrix. Interacts with HSPA9. Interacts (via extracellular domain) with CD44; this interaction is required for PDPN-mediated directional migration and regulation of lamellipodia extension/stabilization during cell spreading and migration. Interacts (via cytoplasmic domain) with MSN and EZR; activates RHOA and promotes epithelial-mesenchymal transition. Interacts with CCL21; relocalized PDPN to the basolateral membrane. Extensively O-glycosylated. Contains sialic acid residues. O-glycosylation is necessary for platelet aggregation activity. Disialylated at Thr-52; sialic acid is critical for platelet-aggregating activity and for CLEC1B interaction. In terms of processing, the N-terminus is blocked. In terms of tissue distribution, in adult kidney, expressed on the urinary surface and foot processes of podocytes and in parietal epithelial cells of Bowman's capsule where it is localized to luminal surfaces. In lung, expressed exclusively on luminal surfaces of type I alveolar epithelial cells and pleural mesothelial cells. Not expressed in type II alveolar cells. In bone, expressed in osteocytes and osteoblasts. In spleen, liver, stomach and intestine, expressed in mesoepithelium. Also expressed in thymic epithelial cells, choroid plexus and leptomeninges.

Its subcellular location is the membrane. The protein localises to the cell projection. The protein resides in the lamellipodium membrane. It is found in the filopodium membrane. It localises to the microvillus membrane. Its subcellular location is the ruffle membrane. The protein localises to the membrane raft. The protein resides in the apical cell membrane. It is found in the basolateral cell membrane. It localises to the invadopodium. Its function is as follows. Mediates effects on cell migration and adhesion through its different partners. During development plays a role in blood and lymphatic vessels separation by binding CLEC1B, triggering CLEC1B activation in platelets and leading to platelet activation and/or aggregation. Interaction with CD9, on the contrary, attenuates platelet aggregation and pulmonary metastasis induced by PDPN. Mediates effects on cell migration and adhesion through its different partners. Through MSN or EZR interaction promotes epithelial-mesenchymal transition (EMT) leading to ERZ phosphorylation and triggering RHOA activation leading to cell migration increase and invasiveness. Interaction with CD44 promotes directional cell migration in epithelial and tumor cells. In lymph nodes (LNs), controls fibroblastic reticular cells (FRCs) adhesion to the extracellular matrix (ECM) and contraction of the actomyosin by maintaining ERM proteins (EZR; MSN and RDX) and MYL9 activation through association with unknown transmembrane proteins. Engagement of CLEC1B by PDPN promotes FRCs relaxation by blocking lateral membrane interactions leading to reduction of ERM proteins (EZR; MSN and RDX) and MYL9 activation. Through binding with LGALS8 may participate in connection of the lymphatic endothelium to the surrounding extracellular matrix. In keratinocytes, induces changes in cell morphology showing an elongated shape, numerous membrane protrusions, major reorganization of the actin cytoskeleton, increased motility and decreased cell adhesion. Controls invadopodia stability and maturation leading to efficient degradation of the extracellular matrix (ECM) in tumor cells through modulation of RHOC activity in order to activate ROCK1/ROCK2 and LIMK1/LIMK2 and inactivation of CFL1. Required for normal lung cell proliferation and alveolus formation at birth. Does not function as a water channel or as a regulator of aquaporin-type water channels. Does not have any effect on folic acid or amino acid transport. The chain is Podoplanin from Rattus norvegicus (Rat).